The following is a 459-amino-acid chain: MDYSFLLIILLLTISTSCCAAPSSYVEEQLRDRISNLPGQPSNVDFRQYSGYVTVHEERGRALFYWLVESPLARDPKSRPLVLWLNGGPGCSSVAYGAAEEIGPFRVGSDGKTLHSKLYAWNKLANLLFLESPAGVGFSYSNTTSDLYTTGDQRTAEDSYIFLVNWFERFPQYKHREFYIVGESYAGHFVPQLSKLVHERNKGFKNPAINLKGFMVGNAVTDDYHDYIGTFEYWWNHGLISDSTYHQLKTACYSVSSQHPSMQCMVALRNAELEQGNIDPYSIFTKPCNSTVALKRFLKGRYPWMSRAYDPCTERYSNVYFNRLDVQKALHANVTRLSYPWKACSDIVGSYWDDSPLSMLPIYKELITAGLKIWVFSGDTDAVVPITATRYSVDALKLATITNWYPWYDHGKVGGWSQVYKGLTLVTVAGAGHEVPLHRPRQAFILFRSFLESKPMPMT.

The N-terminal stretch at 1-20 is a signal peptide; that stretch reads MDYSFLLIILLLTISTSCCA. Intrachain disulfides connect Cys-91–Cys-344, Cys-252–Cys-264, and Cys-288–Cys-312. Asn-142 carries N-linked (GlcNAc...) asparagine glycosylation. The active site involves Ser-184. Asn-289 and Asn-333 each carry an N-linked (GlcNAc...) asparagine glycan. Catalysis depends on residues Asp-381 and His-433.

Belongs to the peptidase S10 family. Ubiquitous.

It is found in the secreted. Probable carboxypeptidase. This chain is Serine carboxypeptidase-like 27 (SCPL27), found in Arabidopsis thaliana (Mouse-ear cress).